An 84-amino-acid polypeptide reads, in one-letter code: Putative membrane protein insertion efficiency factor (84 aa).

Belongs to the UPF0161 family.

It localises to the cell inner membrane. Its function is as follows. Could be involved in insertion of integral membrane proteins into the membrane. The polypeptide is Putative membrane protein insertion efficiency factor (Shewanella baltica (strain OS195)).